Reading from the N-terminus, the 90-residue chain is Accessory gland-specific peptide 26Ab (90 aa).

An N-terminal signal peptide occupies residues 1–21 (MNYFAVICIFSCICLWQFSDA).

As to expression, main cells and secondary cells of the accessory glands of 1 day old virgin males (at protein level). In 5 day old virgin males, only detected in the secondary cells (at protein level). Reappears in the main cells after mating (at protein level). First detected in adult males 3-4 hr after eclosion, levels increase reaching a peak at day 3-5 which is maintained until at least day 10 of adulthood (at protein level). In unmated male adults, levels are maintained for the first 6 days of adulthood and then gradually decrease for at least the next 8 days. No expression in females.

It localises to the secreted. It is found in the extracellular space. The protein resides in the cytoplasm. Its function is as follows. This protein is transferred from male to female during mating and may affect egglaying and behavior after mating. The sequence is that of Accessory gland-specific peptide 26Ab from Drosophila melanogaster (Fruit fly).